An 810-amino-acid chain; its full sequence is Calpain-3 (810 aa).

Over residues 9–27 (VAQQTAAGSVPSTTSTTTE) the composition is skewed to low complexity. The segment at 9 to 31 (VAQQTAAGSVPSTTSTTTEGTGG) is disordered. The region spanning 68 to 410 (LYEDPDFPPN…FTKLEICNLT (343 aa)) is the Calpain catalytic domain. Active-site residues include Cys-123, His-327, and Asn-351. The interval 411-579 (PDTLEADKLQ…KRSLSEEVEN (169 aa)) is domain III. The segment at 578–639 (ENMIEADRPS…SAKAREKSEE (62 aa)) is disordered. The linker stretch occupies residues 580–638 (MIEADRPSKKKKGKPIIFVSDRANSNKELTTDEDAGKDGEKTHVDEKKRSSAKAREKSE). A compositionally biased stretch (basic and acidic residues) spans 613 to 639 (DAGKDGEKTHVDEKKRSSAKAREKSEE). EF-hand domains lie at 638–672 (EEET…VVKK), 681–714 (FELE…DKIK), 711–746 (DKIK…AGFR), and 776–810 (VRLD…TMYA). Residues 639-809 (EETQFRNIFR…VLEWLQLTMY (171 aa)) form a domain IV region. Ca(2+) contacts are provided by Ala-651, Asp-654, Glu-656, Glu-661, Asp-694, Asp-696, Ser-698, Lys-700, Glu-705, Asp-724, Asp-726, Ser-728, Thr-730, Glu-735, Asp-789, Asp-791, Asp-793, and Ile-795.

It belongs to the peptidase C2 family. In terms of assembly, homodimer; via EF-hand domain 4. Interacts with TTN/titin. Interacts with CMYA5; this interaction, which results in CMYA5 proteolysis, may protect CAPN3 from autolysis. Interacts with SIMC1. Interacts with UTP25; the interaction is required for CAPN3 translocation to the nucleolus. In terms of tissue distribution, skeletal muscle. Low levels in spleen, intestine and bone.

It localises to the cytoplasm. The protein resides in the nucleus. The protein localises to the nucleolus. It catalyses the reaction Broad endopeptidase activity.. With respect to regulation, activated by micromolar concentrations of calcium and inhibited by calpastatin. Calcium-regulated non-lysosomal thiol-protease. Proteolytically cleaves CTBP1. Mediates, with UTP25, the proteasome-independent degradation of p53/TP53. This is Calpain-3 (CAPN3) from Gallus gallus (Chicken).